The primary structure comprises 251 residues: Regulator of G-protein signaling 9-binding protein B (251 aa).

The Cytoplasmic segment spans residues 1 to 230 (MPLQNVKVAD…NSKGCCSDGQ (230 aa)). Coiled coils occupy residues 52 to 94 (HLRD…ELER) and 158 to 187 (ANKASLEYQEIEEEILKVDNMITDMEMKVN). A helical; Anchor for type IV membrane protein transmembrane segment spans residues 231–250 (LIVFLLLCGTALVAITLYSI). A topological domain (extracellular) is located at residue Leu-251.

Belongs to the RGS7BP/RGS9BP family.

The protein resides in the membrane. Its function is as follows. Regulator of G protein-coupled receptor (GPCR) signaling. Probably acts by regulating the activity of some 'R7' family protein (RGS6, RGS7, RGS9 and/or RGS11). This is Regulator of G-protein signaling 9-binding protein B (rgs9bp-b) from Xenopus laevis (African clawed frog).